A 74-amino-acid polypeptide reads, in one-letter code: MKIIVLMMMLFAAFSAVVLADKSIEDAALDTVMDRDDDKKECIGHMGWCAWTDGECCEGYRCKLWCRKIIDWLG.

Residues 1–20 (MKIIVLMMMLFAAFSAVVLA) form the signal peptide. A propeptide spanning residues 21–35 (DKSIEDAALDTVMDR) is cleaved from the precursor. Cystine bridges form between cysteine 42-cysteine 57, cysteine 49-cysteine 62, and cysteine 56-cysteine 66. Position 73 is a leucine amide (leucine 73).

As to expression, expressed by the venom gland.

It is found in the secreted. Weakly nhibits voltage-gated sodium channels Nav1.7/SCN9A. High concentration of the toxin (3 uM) inhibits Nav1.7/SCN9A currents by 80%. The chain is Mu-Sparatoxin-Hp2 from Heteropoda pingtungensis (Pingtung huntsman spider).